Here is a 341-residue protein sequence, read N- to C-terminus: Ribosomal RNA small subunit methyltransferase H (341 aa).

S-adenosyl-L-methionine-binding positions include 47-49 (GGY), Asp-64, Phe-91, Asp-109, and Gln-116.

It belongs to the methyltransferase superfamily. RsmH family.

It is found in the cytoplasm. The catalysed reaction is cytidine(1402) in 16S rRNA + S-adenosyl-L-methionine = N(4)-methylcytidine(1402) in 16S rRNA + S-adenosyl-L-homocysteine + H(+). In terms of biological role, specifically methylates the N4 position of cytidine in position 1402 (C1402) of 16S rRNA. The chain is Ribosomal RNA small subunit methyltransferase H from Rhizobium leguminosarum bv. trifolii (strain WSM1325).